A 279-amino-acid polypeptide reads, in one-letter code: HTH-type transcriptional activator RhaS (279 aa).

Residues 175–273 (QALLGWLQNN…SQAPKSLRHQ (99 aa)) form the HTH araC/xylS-type domain. 2 consecutive DNA-binding regions (H-T-H motif) follow at residues 192-213 (GGLA…KQHT) and 240-263 (ITTI…RKAF).

As to quaternary structure, binds DNA as a dimer.

The protein localises to the cytoplasm. Its function is as follows. Activates expression of the rhaBAD and rhaT operons. This chain is HTH-type transcriptional activator RhaS, found in Pectobacterium atrosepticum (strain SCRI 1043 / ATCC BAA-672) (Erwinia carotovora subsp. atroseptica).